The following is a 98-amino-acid chain: Citrate lyase acyl carrier protein (98 aa).

Serine 14 bears the O-(phosphoribosyl dephospho-coenzyme A)serine mark.

Belongs to the CitD family. As to quaternary structure, oligomer with a subunit composition of (alpha,beta,gamma)6.

The protein resides in the cytoplasm. Its function is as follows. Covalent carrier of the coenzyme of citrate lyase. This is Citrate lyase acyl carrier protein from Vibrio cholerae serotype O1 (strain ATCC 39315 / El Tor Inaba N16961).